We begin with the raw amino-acid sequence, 1286 residues long: ABC transporter B family member 1 (1286 aa).

The next 2 helical transmembrane spans lie at 42–62 and 93–113; these read VLMGIGSVGAFVHGCSLPLFL and FLVVGAAIWASSWAEISCWMW. Residues 44–333 enclose the ABC transmembrane type-1 1 domain; that stretch reads MGIGSVGAFV…SAPSMAAFAK (290 aa). Residue Asp-139 coordinates ATP. The next 2 membrane-spanning stretches (helical) occupy residues 166–186 and 187–207; these read LGNFIHYMATFVSGFIVGFTA and VWQLALVTLAVVPLIAVIGGI. Asn-217 carries N-linked (GlcNAc...) asparagine glycosylation. The next 2 membrane-spanning stretches (helical) occupy residues 277 to 297 and 301 to 321; these read ATYFVVFCCYALLLWYGGYLV and LTNGGLAIATMFAVMIGGLAL. Residue Tyr-286 participates in brassinolide binding. The region spanning 368–604 is the ABC transporter 1 domain; sequence VELKNVDFSY…GENGVYAKLI (237 aa). Residues Tyr-377, Ser-379, Arg-380, Gly-408, Lys-409, Ser-410, and Thr-411 each contribute to the ATP site. Residues 614 to 647 form a disordered region; the sequence is AMSNARKSSARPSSARNSVSSPIMTRNSSYGRSP. Residues 616-635 are compositionally biased toward low complexity; sequence SNARKSSARPSSARNSVSSP. An N-linked (GlcNAc...) asparagine glycan is attached at Asn-640. Positions 700-988 constitute an ABC transmembrane type-1 2 domain; that stretch reads ALLGSVGSVI…TLTLAPDFIK (289 aa). The next 2 helical transmembrane spans lie at 705–725 and 745–765; these read VGSVICGSLSAFFAYVLSAVL and YLLIGLSSAALVFNTLQHSFW. A glycan (N-linked (GlcNAc...) asparagine) is linked at Asn-771. Asp-793 provides a ligand contact to ATP. An N-linked (GlcNAc...) asparagine glycan is attached at Asn-797. 4 consecutive transmembrane segments (helical) span residues 821 to 843, 845 to 867, 932 to 952, and 967 to 987; these read ISVIVQNTALMLVACTAGFVLQW, LALVLVAVFPVVVAATVLQKMFM, VAQFCLYASYALGLWYASWLV, and MVLMVSANGAAETLTLAPDFI. Residues Tyr-941 and Glu-978 each contribute to the brassinolide site. Residues 1024–1260 enclose the ABC transporter 2 domain; it reads VELKHIDFSY…HPDGIYARMI (237 aa). Tyr-1033, Arg-1036, Gly-1064, Lys-1065, and Ser-1066 together coordinate ATP. The interval 1049 to 1286 is interaction with FKBP42/TWD1; sequence ARAGKTLALV…SSSRVKEDDA (238 aa).

The protein belongs to the ABC transporter superfamily. ABCB family. Multidrug resistance exporter (TC 3.A.1.201) subfamily. As to quaternary structure, interacts with 1-naphthylphthalamic acid (NPA) and FKBP42/TWD1. As to expression, ubiquitous, with high levels in peduncles. Mostly localized in young developing tissues, including meristems, as well as root and shoot apices.

The protein resides in the cell membrane. The enzyme catalyses (indol-3-yl)acetate(in) + ATP + H2O = (indol-3-yl)acetate(out) + ADP + phosphate + H(+). It catalyses the reaction brassinolide(in) + ATP + H2O = brassinolide(out) + ADP + phosphate + H(+). The catalysed reaction is 24-epi-brassinolide(in) + ATP + H2O = 24-epi-brassinolide(out) + ADP + phosphate + H(+). It carries out the reaction 24-epi-castasterone(in) + ATP + H2O = 24-epi-castasterone(out) + ADP + phosphate + H(+). The enzyme catalyses castasterone(in) + ATP + H2O = castasterone(out) + ADP + phosphate + H(+). Transport capacity is stimulated by the chaperone protein FKBP42/TWD1. Transport activity inhibited by 1-N-naphthylphthalamic acid (NPA), cyclopropyl propane dione (CPD), cyclosporin A, verapamil and quercetin. ATPase activity is specifically activated by bioactive brassinosteroids in a dose-dependent manner, including brassinolide (BL), 24-epiBL, 24-epicastasterone (24-epiCS) and castasterone-alkyne; BL binding leads to structural changes. Inhibited by vanadate. Its function is as follows. Brassinosteroid exporter that, in conjunction with ABCB19, supports the accumulation of exogenous brassinosteroids (BR) in the apoplast, thus promoting BR signaling initiation involving the specific receptor BRI1 and required for plant growth and stress responses. Auxin efflux transporter that acts as a negative regulator of light signaling to promote hypocotyl elongation. May contribute to the regulation of leaf position and morphology during PHOT1-mediated blue light responses involving auxin distribution, especially in low light fluence. Together with ABCB19 and in a FKBP42/TWD1-dependent manner, supports seed development by promoting stamen elongation and, to a lesser extent, anther dehiscence and pollen maturation, probably as auxin transporters. Mediates the accumulation of chlorophyll and anthocyanin, as well as the expression of genes in response to light. Participates directly in auxin efflux and thus regulates the polar (presumably basipetal) auxin transport (from root tips to root elongating zone). Also transports some auxin metabolites such as oxindoleacetic acid and indoleacetaldehyde. Involved in diverse auxin-mediated responses including gravitropism, phototropism and lateral root formation. Confers resistance to herbicides such as dicamba, pendimethalin, oryzalin, and monosodium acid methanearsonate (MSMA), but not to herbicides such as glyphosate, atrazine, bentazon and fluazifop-p-butyl. Also mediates resistance to xenobiotics such as cycloheximide and the cytokinin N6-(2-isopentenyl)adenine (2IP). In Arabidopsis thaliana (Mouse-ear cress), this protein is ABC transporter B family member 1.